Reading from the N-terminus, the 275-residue chain is Putative acyl-[acyl-carrier-protein] desaturase DesA2 (275 aa).

Fe cation contacts are provided by glutamate 107, histidine 110, glutamate 159, glutamate 189, and histidine 192.

Belongs to the fatty acid desaturase type 2 family. In terms of assembly, homodimer. Fe(2+) serves as cofactor.

The protein operates within lipid metabolism; fatty acid metabolism. Its function is as follows. May be a desaturase involved in mycobacterial fatty acid biosynthesis. This is Putative acyl-[acyl-carrier-protein] desaturase DesA2 (desA2) from Mycobacterium tuberculosis (strain CDC 1551 / Oshkosh).